The chain runs to 173 residues: Crossover junction endodeoxyribonuclease RuvC (173 aa).

Residues Asp-11, Glu-71, and Asp-143 contribute to the active site. Asp-11, Glu-71, and Asp-143 together coordinate Mg(2+).

The protein belongs to the RuvC family. As to quaternary structure, homodimer which binds Holliday junction (HJ) DNA. The HJ becomes 2-fold symmetrical on binding to RuvC with unstacked arms; it has a different conformation from HJ DNA in complex with RuvA. In the full resolvosome a probable DNA-RuvA(4)-RuvB(12)-RuvC(2) complex forms which resolves the HJ. Requires Mg(2+) as cofactor.

It is found in the cytoplasm. The catalysed reaction is Endonucleolytic cleavage at a junction such as a reciprocal single-stranded crossover between two homologous DNA duplexes (Holliday junction).. Its function is as follows. The RuvA-RuvB-RuvC complex processes Holliday junction (HJ) DNA during genetic recombination and DNA repair. Endonuclease that resolves HJ intermediates. Cleaves cruciform DNA by making single-stranded nicks across the HJ at symmetrical positions within the homologous arms, yielding a 5'-phosphate and a 3'-hydroxyl group; requires a central core of homology in the junction. The consensus cleavage sequence is 5'-(A/T)TT(C/G)-3'. Cleavage occurs on the 3'-side of the TT dinucleotide at the point of strand exchange. HJ branch migration catalyzed by RuvA-RuvB allows RuvC to scan DNA until it finds its consensus sequence, where it cleaves and resolves the cruciform DNA. The protein is Crossover junction endodeoxyribonuclease RuvC of Brucella suis (strain ATCC 23445 / NCTC 10510).